We begin with the raw amino-acid sequence, 552 residues long: Cation/acetate symporter ActP (552 aa).

Transmembrane regions (helical) follow at residues 5–25 (FMML…DALT), 35–55 (IQAI…TYWA), 78–98 (GLAI…SALV), 105–125 (GLIY…LIAE), 151–171 (LSAC…MVGA), 185–205 (VAVI…GMLA), 208–228 (WVQI…AVMV), 264–284 (ISAL…PHIL), 305–325 (GFMG…ILLV), 357–377 (FFLG…VAGL), 407–427 (VSKI…ILFE), 431–451 (IAFM…PIII), 466–486 (IGGW…PTIW), and 499–519 (YDYP…FFSI).

It belongs to the sodium:solute symporter (SSF) (TC 2.A.21) family.

It localises to the cell inner membrane. Its function is as follows. Transports acetate. In Pectobacterium carotovorum subsp. carotovorum (strain PC1), this protein is Cation/acetate symporter ActP.